A 120-amino-acid polypeptide reads, in one-letter code: MLKFTEEHEWLKVEGGVATVGITEHAAGQLGDLVFVELPEAGATFSKGDSAATVESVKAASDVYCPLDGEIVEINQAIVDDPSLVNSDPQGAAWFFKLKLADPRSADNLLDEAAYKELVG.

Residues 17–99 enclose the Lipoyl-binding domain; that stretch reads VATVGITEHA…QGAAWFFKLK (83 aa). Lys58 is subject to N6-lipoyllysine.

Belongs to the GcvH family. In terms of assembly, the glycine cleavage system is composed of four proteins: P, T, L and H. (R)-lipoate is required as a cofactor.

Functionally, the glycine cleavage system catalyzes the degradation of glycine. The H protein shuttles the methylamine group of glycine from the P protein to the T protein. This chain is Glycine cleavage system H protein, found in Sinorhizobium fredii (strain NBRC 101917 / NGR234).